A 387-amino-acid chain; its full sequence is Formate-dependent phosphoribosylglycinamide formyltransferase (387 aa).

Residues 12–13 and E72 contribute to the N(1)-(5-phospho-beta-D-ribosyl)glycinamide site; that span reads EL. Residues R104, K145, 150 to 155, 185 to 188, and E193 each bind ATP; these read SSGKGQ and EEFI. Residues 109-300 enclose the ATP-grasp domain; it reads DLAARELGLA…EFELHLRAVL (192 aa). Mg(2+)-binding residues include E258 and E270. N(1)-(5-phospho-beta-D-ribosyl)glycinamide is bound by residues D277, K347, and 354–355; that span reads RR.

It belongs to the PurK/PurT family. Homodimer.

It catalyses the reaction N(1)-(5-phospho-beta-D-ribosyl)glycinamide + formate + ATP = N(2)-formyl-N(1)-(5-phospho-beta-D-ribosyl)glycinamide + ADP + phosphate + H(+). It participates in purine metabolism; IMP biosynthesis via de novo pathway; N(2)-formyl-N(1)-(5-phospho-D-ribosyl)glycinamide from N(1)-(5-phospho-D-ribosyl)glycinamide (formate route): step 1/1. Its function is as follows. Involved in the de novo purine biosynthesis. Catalyzes the transfer of formate to 5-phospho-ribosyl-glycinamide (GAR), producing 5-phospho-ribosyl-N-formylglycinamide (FGAR). Formate is provided by PurU via hydrolysis of 10-formyl-tetrahydrofolate. This is Formate-dependent phosphoribosylglycinamide formyltransferase from Anaeromyxobacter dehalogenans (strain 2CP-C).